A 156-amino-acid chain; its full sequence is ATP synthase subunit b (156 aa).

A helical transmembrane segment spans residues 7 to 29; sequence LLGQAISFALFVWFCMKYVWPPL.

This sequence belongs to the ATPase B chain family. As to quaternary structure, F-type ATPases have 2 components, F(1) - the catalytic core - and F(0) - the membrane proton channel. F(1) has five subunits: alpha(3), beta(3), gamma(1), delta(1), epsilon(1). F(0) has three main subunits: a(1), b(2) and c(10-14). The alpha and beta chains form an alternating ring which encloses part of the gamma chain. F(1) is attached to F(0) by a central stalk formed by the gamma and epsilon chains, while a peripheral stalk is formed by the delta and b chains.

The protein resides in the cell inner membrane. F(1)F(0) ATP synthase produces ATP from ADP in the presence of a proton or sodium gradient. F-type ATPases consist of two structural domains, F(1) containing the extramembraneous catalytic core and F(0) containing the membrane proton channel, linked together by a central stalk and a peripheral stalk. During catalysis, ATP synthesis in the catalytic domain of F(1) is coupled via a rotary mechanism of the central stalk subunits to proton translocation. Functionally, component of the F(0) channel, it forms part of the peripheral stalk, linking F(1) to F(0). The polypeptide is ATP synthase subunit b (Vibrio alginolyticus).